Reading from the N-terminus, the 438-residue chain is Alpha-methylserine aldolase (438 aa).

An N6-(pyridoxal phosphate)lysine modification is found at Lys-252.

It belongs to the SHMT family. Alpha-methylserine aldolase subfamily. In terms of assembly, homodimer. Pyridoxal 5'-phosphate serves as cofactor.

The catalysed reaction is 2-methyl-L-serine = formaldehyde + L-alanine. With respect to regulation, in the alpha-methyl-L-serine synthesis reaction, activity is inhibited by an excess amount of formaldehyde (at a concentration greater than 10 mM). Its function is as follows. Catalyzes the reversible interconversion of alpha-methyl-L-serine to L-alanine and formaldehyde. Cannot use alpha-methyl-D-serine, L-serine or D-serine. Cannot use D-alanine instead of L-alanine as the substrate for alpha-methyl-L-serine synthesis. Does not require tetrahydrofolate (THF) for activity. The sequence is that of Alpha-methylserine aldolase from Ralstonia sp.